We begin with the raw amino-acid sequence, 564 residues long: Homeobox protein unc-62 (564 aa).

5 disordered regions span residues 40 to 59 (NEQFNDGYGPPPGSASADPA), 216 to 270 (ERAS…VMGG), 293 to 313 (SSSSNQAGDHPLANGGTLHST), 328 to 397 (PSTC…KVPK), and 455 to 503 (IDQN…PSSL). An MEIS N-terminal domain is found at 133–218 (SSDVCSSASF…PLDIVGDERA (86 aa)). Low complexity predominate over residues 219–230 (SSSQPPMSPGSM). Polar residues-rich tracts occupy residues 328–344 (PSTCSSGGLRQDSTPLS) and 381–390 (LSDSANGSQN). The homeobox; TALE-type DNA-binding region spans 392–454 (KRKVPKVFSK…NARRRIVQPM (63 aa)). Polar residues-rich tracts occupy residues 455–469 (IDQNNRAGRSGQMNV) and 494–503 (ANYSPDPSSL).

The protein belongs to the TALE/MEIS homeobox family. In terms of assembly, forms a heterodimer with homeobox ceh-60.

It localises to the nucleus. Its function is as follows. Acts redundantly with ceh-20 and ceh-40 to perform overlapping roles during embryogenesis. Required for postembryonic development of the ectoderm, including the Q, V and P cell lineages, playing a crucial role in ensuring that these cells and their descendants undergo their invariant patterns of cell division, migration, fusion and morphogenesis. Has a role in the mig-13 pathway to promote anterior migration of neuroblasts in the Q lineage. Required for multiple roles in regulating vulva development. Associates with homeobox ceh-60 to regulate gene expression, including repression of genes involved in innate immunity and activation of genes involved in vitellogenesis. Involved in lipid homeostasis, contributing to the formation of the cuticle. The chain is Homeobox protein unc-62 (unc-62) from Caenorhabditis elegans.